A 300-amino-acid chain; its full sequence is UDP-N-acetylenolpyruvoylglucosamine reductase (300 aa).

The region spanning 27–192 (KVGGPADYLA…ISAKFALKPG (166 aa)) is the FAD-binding PCMH-type domain. Residue R171 is part of the active site. Catalysis depends on S221, which acts as the Proton donor. E291 is an active-site residue.

The protein belongs to the MurB family. It depends on FAD as a cofactor.

The protein localises to the cytoplasm. The enzyme catalyses UDP-N-acetyl-alpha-D-muramate + NADP(+) = UDP-N-acetyl-3-O-(1-carboxyvinyl)-alpha-D-glucosamine + NADPH + H(+). Its pathway is cell wall biogenesis; peptidoglycan biosynthesis. Its function is as follows. Cell wall formation. This is UDP-N-acetylenolpyruvoylglucosamine reductase from Streptococcus agalactiae serotype Ia (strain ATCC 27591 / A909 / CDC SS700).